Here is a 301-residue protein sequence, read N- to C-terminus: Ribosomal RNA small subunit methyltransferase A (301 aa).

The S-adenosyl-L-methionine site is built by N23, I25, G50, E72, D97, and N149.

This sequence belongs to the class I-like SAM-binding methyltransferase superfamily. rRNA adenine N(6)-methyltransferase family. RsmA subfamily.

The protein localises to the cytoplasm. The catalysed reaction is adenosine(1518)/adenosine(1519) in 16S rRNA + 4 S-adenosyl-L-methionine = N(6)-dimethyladenosine(1518)/N(6)-dimethyladenosine(1519) in 16S rRNA + 4 S-adenosyl-L-homocysteine + 4 H(+). Its function is as follows. Specifically dimethylates two adjacent adenosines (A1518 and A1519) in the loop of a conserved hairpin near the 3'-end of 16S rRNA in the 30S particle. May play a critical role in biogenesis of 30S subunits. The protein is Ribosomal RNA small subunit methyltransferase A of Rickettsia conorii (strain ATCC VR-613 / Malish 7).